The primary structure comprises 155 residues: U4/U6.U5 small nuclear ribonucleoprotein 27 kDa protein (155 aa).

Basic residues-rich tracts occupy residues 1–31 and 39–59; these read MGRSRSRSPRRERRRSRSTSRERERRRRERS and RRSRSRSPHRRRSRSPRRHRS. Positions 1–97 are disordered; it reads MGRSRSRSPR…ITEEDLEGKT (97 aa). Phosphoserine is present on residues serine 61 and serine 65. Residues 66–97 are compositionally biased toward basic and acidic residues; that stretch reads RLKERRDEEKKETKETKSKERQITEEDLEGKT. 3 positions are modified to phosphoserine: serine 111, serine 114, and serine 132.

Belongs to the SNUT3 family. In terms of assembly, part of a tri-snRNP complex. Post-translationally, phosphorylated in vitro by snRNP-associated protein kinase.

Its subcellular location is the nucleus. Its function is as follows. May play a role in mRNA splicing. The polypeptide is U4/U6.U5 small nuclear ribonucleoprotein 27 kDa protein (SNRNP27) (Homo sapiens (Human)).